A 138-amino-acid polypeptide reads, in one-letter code: Small ribosomal subunit protein uS11c (138 aa).

The interval 1 to 21 (MTKSIPRIGSRRGGRIASRKN) is disordered. Basic residues predominate over residues 9–21 (GSRRGGRIASRKN).

Belongs to the universal ribosomal protein uS11 family. As to quaternary structure, part of the 30S ribosomal subunit.

The protein resides in the plastid. Its subcellular location is the chloroplast. This Calycanthus floridus var. glaucus (Eastern sweetshrub) protein is Small ribosomal subunit protein uS11c.